The primary structure comprises 447 residues: MVHVRFAPSPTGYLHVGNARIAVANALFALRYSGKFTLRLDDTDLERSRDEYAEAIAQDLRWMGIEWADTFRQRDNMDRYEAAADALKASGRLYPCFESEEELRYKRELRLKQGRAPVYDRAMLKMTPEQRAQAEANGKRPYWRFLLSDRTVGWRDGVLGPRQVKLQAISDPVVIRADGTPLYTFTSVVDDIATGVTHIIRGEDHISNSGVQTDLFEALGKVAPALAHLPLLMDADGGKLSKRIDSLTLRSLARDGIEPVALVSYLARLGSSRDPQPLTLAELAQEFDLDAFSASSARFDGSQLAALNRRTLQTMPFSAVQDRLPQGATEAFWEAVRGNLDMLAEARLWWDVVAGSIVPPVLTDEDNALLKQALPLLPQEPWDTTTWSVWTRAVKEASDRSGRALFRPLRLALTGEEHGPELAALLPLMGAERVRTRLTLTSGAMAG.

A 'HIGH' region motif is present at residues 8 to 18 (PSPTGYLHVGN). A 'KMSKS' region motif is present at residues 239–243 (KLSKR). K242 provides a ligand contact to ATP.

Belongs to the class-I aminoacyl-tRNA synthetase family. Glutamate--tRNA ligase type 1 subfamily. In terms of assembly, monomer.

It is found in the cytoplasm. It catalyses the reaction tRNA(Glu) + L-glutamate + ATP = L-glutamyl-tRNA(Glu) + AMP + diphosphate. In terms of biological role, catalyzes the attachment of glutamate to tRNA(Glu) in a two-step reaction: glutamate is first activated by ATP to form Glu-AMP and then transferred to the acceptor end of tRNA(Glu). In Granulibacter bethesdensis (strain ATCC BAA-1260 / CGDNIH1), this protein is Glutamate--tRNA ligase 2.